The sequence spans 80 residues: Large ribosomal subunit protein bL31B (80 aa).

The protein belongs to the bacterial ribosomal protein bL31 family. Type B subfamily. As to quaternary structure, part of the 50S ribosomal subunit.

The chain is Large ribosomal subunit protein bL31B from Xylella fastidiosa (strain M23).